The sequence spans 437 residues: MLPTPSRSHKLSGYAAVLFFLWLVCSPAQAALNIEIFGGGANQIPVAIVPFSGEEGLGAQSLTPVISADLQRTGLFKLVDPGGLRPHEPVEVSFPDWINRGASALAIGTAIPVSGGQISIRVRLLDVARQAELGSYVETVAPEQLRAAAHRIADMIYEKLTGDVGVFSTRIAYVIKQGKKYSLQVADADGFNAQPVIEYTEPIISPAWSPDGTRLAYVSFENKKPVVYVQTLATRTRKAVANFRGSNSAPAWSPDGRKLAVVLSVMGGSQIFLINSDGGGLQRLTQSSGIDTEPSFSPDGRYIIFTSDRGGSPQIYRMPVTGGVSKVAERLTFEGSYNVSPRYSPDGKGFTFIHRSGDRFNVAIQDFATGQVRLLTDSRFDESPSFAPNGRMVLYATEIRGRGILSAVSSDGRTRQQLSTQTGDIREPAWGPLRRLQ.

The N-terminal stretch at 1–30 (MLPTPSRSHKLSGYAAVLFFLWLVCSPAQA) is a signal peptide. A compositionally biased stretch (polar residues) spans 410–423 (SDGRTRQQLSTQTG). The segment at 410–437 (SDGRTRQQLSTQTGDIREPAWGPLRRLQ) is disordered.

This sequence belongs to the TolB family. As to quaternary structure, the Tol-Pal system is composed of five core proteins: the inner membrane proteins TolA, TolQ and TolR, the periplasmic protein TolB and the outer membrane protein Pal. They form a network linking the inner and outer membranes and the peptidoglycan layer.

It is found in the periplasm. Part of the Tol-Pal system, which plays a role in outer membrane invagination during cell division and is important for maintaining outer membrane integrity. In Nitrosospira multiformis (strain ATCC 25196 / NCIMB 11849 / C 71), this protein is Tol-Pal system protein TolB.